A 165-amino-acid polypeptide reads, in one-letter code: UPF0262 protein Sala_0765 (165 aa).

It belongs to the UPF0262 family.

The polypeptide is UPF0262 protein Sala_0765 (Sphingopyxis alaskensis (strain DSM 13593 / LMG 18877 / RB2256) (Sphingomonas alaskensis)).